A 236-amino-acid polypeptide reads, in one-letter code: 2-C-methyl-D-erythritol 4-phosphate cytidylyltransferase (236 aa).

It belongs to the IspD/TarI cytidylyltransferase family. IspD subfamily. Homodimer.

The enzyme catalyses 2-C-methyl-D-erythritol 4-phosphate + CTP + H(+) = 4-CDP-2-C-methyl-D-erythritol + diphosphate. The protein operates within isoprenoid biosynthesis; isopentenyl diphosphate biosynthesis via DXP pathway; isopentenyl diphosphate from 1-deoxy-D-xylulose 5-phosphate: step 2/6. Functionally, catalyzes the formation of 4-diphosphocytidyl-2-C-methyl-D-erythritol from CTP and 2-C-methyl-D-erythritol 4-phosphate (MEP). This is 2-C-methyl-D-erythritol 4-phosphate cytidylyltransferase from Salmonella newport (strain SL254).